The following is a 296-amino-acid chain: NAD kinase (296 aa).

The active-site Proton acceptor is the Asp-73. Residues 73–74 (DG), Lys-78, 151–152 (NE), Arg-178, Asp-180, and 191–196 (TAHAMS) each bind NAD(+).

Belongs to the NAD kinase family. It depends on a divalent metal cation as a cofactor.

The protein localises to the cytoplasm. It carries out the reaction NAD(+) + ATP = ADP + NADP(+) + H(+). Its function is as follows. Involved in the regulation of the intracellular balance of NAD and NADP, and is a key enzyme in the biosynthesis of NADP. Catalyzes specifically the phosphorylation on 2'-hydroxyl of the adenosine moiety of NAD to yield NADP. The sequence is that of NAD kinase from Francisella tularensis subsp. holarctica (strain FTNF002-00 / FTA).